The primary structure comprises 636 residues: LDL receptor repeat-containing protein egg-1 (636 aa).

The Cytoplasmic segment spans residues 1–130; the sequence is MSSIAQKNRN…NHSNLFQCPS (130 aa). Residues 131-151 form a helical; Signal-anchor for type II membrane protein membrane-spanning segment; sequence VAIVLVLALVILGVLAAIPLT. Topologically, residues 152–636 are extracellular; sequence LMLTSSAQKM…VLKNSGRFPY (485 aa). An N-linked (GlcNAc...) asparagine glycan is attached at asparagine 202. 8 consecutive LDL-receptor class A domains span residues 205 to 243, 244 to 296, 298 to 335, 336 to 375, 378 to 415, 457 to 499, 503 to 541, and 542 to 579; these read TCSG…ENCK, ECQS…AMCK, TCSK…NNCN, KCQK…QQCD, TCSG…ENCP, KCHP…KNCT, ECGI…QNCS, and QCAS…LKCS. Cystine bridges form between cysteine 213-cysteine 233, cysteine 227-cysteine 242, cysteine 245-cysteine 273, cysteine 251-cysteine 286, cysteine 280-cysteine 295, cysteine 299-cysteine 312, cysteine 306-cysteine 325, cysteine 319-cysteine 334, cysteine 337-cysteine 365, cysteine 359-cysteine 374, cysteine 379-cysteine 392, cysteine 387-cysteine 405, cysteine 399-cysteine 414, cysteine 458-cysteine 476, cysteine 466-cysteine 489, cysteine 483-cysteine 498, cysteine 504-cysteine 518, cysteine 514-cysteine 531, cysteine 525-cysteine 540, cysteine 543-cysteine 556, cysteine 550-cysteine 569, and cysteine 563-cysteine 578. An N-linked (GlcNAc...) asparagine glycan is attached at asparagine 508. The N-linked (GlcNAc...) asparagine glycan is linked to asparagine 614.

It localises to the cell membrane. Its function is as follows. Probable receptor which is required for the oocyte-to-zygote transition although its exact function is controversial. Seems to be required for fertilization probably by promoting the interaction or fusion between sperm and oocyte. Conversely, shown to be dispensable for fertilization but required for the formation of a continuous and cohesive eggshell chitin layer by maintaining a homogenous distribution of chitin synthase chs-1 at the unfertilized oocyte cell membrane. Appears to recruit or maintain together to the unfertilized oocyte cortex several proteins including chs-1, kinase mbk-2 and pseudophosphatases egg-3, and possibly egg-4 and egg-5. The polypeptide is LDL receptor repeat-containing protein egg-1 (Caenorhabditis briggsae).